A 129-amino-acid chain; its full sequence is uncharacterized protein (129 aa).

This is an uncharacterized protein from Acheta domesticus (House cricket).